The primary structure comprises 601 residues: Methionine--tRNA ligase (601 aa).

The 'HIGH' region signature appears at 21–31 (PYANGPRHIGH). The Zn(2+) site is built by cysteine 153, cysteine 156, cysteine 166, and cysteine 169. Asparagine 361 is a binding site for ATP.

Belongs to the class-I aminoacyl-tRNA synthetase family. MetG type 1 subfamily. As to quaternary structure, monomer. Zn(2+) is required as a cofactor.

Its subcellular location is the cytoplasm. It catalyses the reaction tRNA(Met) + L-methionine + ATP = L-methionyl-tRNA(Met) + AMP + diphosphate. In terms of biological role, is required not only for elongation of protein synthesis but also for the initiation of all mRNA translation through initiator tRNA(fMet) aminoacylation. In Cutibacterium acnes (strain DSM 16379 / KPA171202) (Propionibacterium acnes), this protein is Methionine--tRNA ligase.